The following is a 455-amino-acid chain: Bifunctional protein GlmU (455 aa).

A pyrophosphorylase region spans residues 1–225; the sequence is MNIVILAAGM…EWETLGVNSK (225 aa). UDP-N-acetyl-alpha-D-glucosamine is bound by residues 6-9, K20, Q71, 76-77, 98-100, G135, E150, N165, and N223; these read LAAG, GT, and YGD. D100 is a Mg(2+) binding site. Residue N223 participates in Mg(2+) binding. A linker region spans residues 226-246; it reads VQLAELERIHQRNLAQQLLED. Residues 247–455 form an N-acetyltransferase region; the sequence is GVTLIDPARI…QRPVKQKKEG (209 aa). UDP-N-acetyl-alpha-D-glucosamine is bound by residues R329 and K347. H359 functions as the Proton acceptor in the catalytic mechanism. UDP-N-acetyl-alpha-D-glucosamine-binding residues include Y362 and N373. Residues A376, 382 to 383, S401, A419, and R436 contribute to the acetyl-CoA site; that span reads NY.

In the N-terminal section; belongs to the N-acetylglucosamine-1-phosphate uridyltransferase family. It in the C-terminal section; belongs to the transferase hexapeptide repeat family. Homotrimer. It depends on Mg(2+) as a cofactor.

The protein resides in the cytoplasm. It catalyses the reaction alpha-D-glucosamine 1-phosphate + acetyl-CoA = N-acetyl-alpha-D-glucosamine 1-phosphate + CoA + H(+). The catalysed reaction is N-acetyl-alpha-D-glucosamine 1-phosphate + UTP + H(+) = UDP-N-acetyl-alpha-D-glucosamine + diphosphate. It functions in the pathway nucleotide-sugar biosynthesis; UDP-N-acetyl-alpha-D-glucosamine biosynthesis; N-acetyl-alpha-D-glucosamine 1-phosphate from alpha-D-glucosamine 6-phosphate (route II): step 2/2. The protein operates within nucleotide-sugar biosynthesis; UDP-N-acetyl-alpha-D-glucosamine biosynthesis; UDP-N-acetyl-alpha-D-glucosamine from N-acetyl-alpha-D-glucosamine 1-phosphate: step 1/1. It participates in bacterial outer membrane biogenesis; LPS lipid A biosynthesis. Functionally, catalyzes the last two sequential reactions in the de novo biosynthetic pathway for UDP-N-acetylglucosamine (UDP-GlcNAc). The C-terminal domain catalyzes the transfer of acetyl group from acetyl coenzyme A to glucosamine-1-phosphate (GlcN-1-P) to produce N-acetylglucosamine-1-phosphate (GlcNAc-1-P), which is converted into UDP-GlcNAc by the transfer of uridine 5-monophosphate (from uridine 5-triphosphate), a reaction catalyzed by the N-terminal domain. In Ralstonia pickettii (strain 12J), this protein is Bifunctional protein GlmU.